The primary structure comprises 529 residues: uncharacterized protein (529 aa).

A signal peptide spans 1 to 20; the sequence is MYFLILILVLLLIMVAAATA.

This is an uncharacterized protein from Orgyia pseudotsugata multicapsid polyhedrosis virus (OpMNPV).